The chain runs to 345 residues: S-adenosylmethionine:tRNA ribosyltransferase-isomerase (345 aa).

This sequence belongs to the QueA family. In terms of assembly, monomer.

Its subcellular location is the cytoplasm. The catalysed reaction is 7-aminomethyl-7-carbaguanosine(34) in tRNA + S-adenosyl-L-methionine = epoxyqueuosine(34) in tRNA + adenine + L-methionine + 2 H(+). It functions in the pathway tRNA modification; tRNA-queuosine biosynthesis. Functionally, transfers and isomerizes the ribose moiety from AdoMet to the 7-aminomethyl group of 7-deazaguanine (preQ1-tRNA) to give epoxyqueuosine (oQ-tRNA). In Shewanella halifaxensis (strain HAW-EB4), this protein is S-adenosylmethionine:tRNA ribosyltransferase-isomerase.